The primary structure comprises 157 residues: Probable succinate transporter subunit YjjB (157 aa).

4 consecutive transmembrane segments (helical) span residues 8–28 (FALA…AMVF), 50–70 (MILM…SMLV), 87–107 (VFTV…TAMI), and 129–149 (FLTA…PGLW).

Belongs to the ThrE exporter (TC 2.A.79) family. The transporter is composed of YjjB and YjjP.

The protein localises to the cell inner membrane. Functionally, involved in succinate export with YjjP. Both proteins are required for export. This chain is Probable succinate transporter subunit YjjB, found in Escherichia coli (strain ATCC 8739 / DSM 1576 / NBRC 3972 / NCIMB 8545 / WDCM 00012 / Crooks).